A 319-amino-acid chain; its full sequence is NADH-cytochrome b5 reductase 2 (319 aa).

A helical membrane pass occupies residues 30–46 (LAPVYLTVGLAGLGVGL). Positions 69 to 173 (QGWVDLKLSE…KGPLPKYPWE (105 aa)) constitute an FAD-binding FR-type domain. 176–211 (KHQHICLIAGGTGITPMYQLARHIFKNPEDKTKVTL) lines the FAD pocket.

This sequence belongs to the flavoprotein pyridine nucleotide cytochrome reductase family. Requires FAD as cofactor.

The protein localises to the mitochondrion outer membrane. The catalysed reaction is 2 Fe(III)-[cytochrome b5] + NADH = 2 Fe(II)-[cytochrome b5] + NAD(+) + H(+). Functionally, may mediate the reduction of outer membrane cytochrome b5. The polypeptide is NADH-cytochrome b5 reductase 2 (mcr1) (Aspergillus terreus (strain NIH 2624 / FGSC A1156)).